A 312-amino-acid chain; its full sequence is Coproporphyrin III ferrochelatase (312 aa).

Residues Y13, R30, 46 to 47 (RY), S54, and Y125 each bind Fe-coproporphyrin III. Residues H182 and E263 each contribute to the Fe(2+) site.

Belongs to the ferrochelatase family.

It localises to the cytoplasm. The catalysed reaction is Fe-coproporphyrin III + 2 H(+) = coproporphyrin III + Fe(2+). Its pathway is porphyrin-containing compound metabolism; protoheme biosynthesis. In terms of biological role, involved in coproporphyrin-dependent heme b biosynthesis. Catalyzes the insertion of ferrous iron into coproporphyrin III to form Fe-coproporphyrin III. This Oceanobacillus iheyensis (strain DSM 14371 / CIP 107618 / JCM 11309 / KCTC 3954 / HTE831) protein is Coproporphyrin III ferrochelatase.